The primary structure comprises 186 residues: MSVADIKKGVEQKMQRSIEAFKNDLAKIRTGRAHTGLLDHVQVDYYGSMVPISQVANLTLVDARTIGVQPWEKNMVAKVEKAIREADLGLNPATAGDLIRVPMPPLTEERRRELTKVVKGEGETAKVAIRNLRRDANEALKKLVKDKEISEDDERRAGDDVQKLTDKHVAEIDKLVQTKEAEIMTV.

It belongs to the RRF family.

The protein localises to the cytoplasm. In terms of biological role, responsible for the release of ribosomes from messenger RNA at the termination of protein biosynthesis. May increase the efficiency of translation by recycling ribosomes from one round of translation to another. This is Ribosome-recycling factor from Burkholderia multivorans (strain ATCC 17616 / 249).